A 333-amino-acid chain; its full sequence is UDP-3-O-acylglucosamine N-acyltransferase 2 (333 aa).

Catalysis depends on H243, which acts as the Proton acceptor.

The protein belongs to the transferase hexapeptide repeat family. LpxD subfamily. As to quaternary structure, homotrimer.

The enzyme catalyses a UDP-3-O-[(3R)-3-hydroxyacyl]-alpha-D-glucosamine + a (3R)-hydroxyacyl-[ACP] = a UDP-2-N,3-O-bis[(3R)-3-hydroxyacyl]-alpha-D-glucosamine + holo-[ACP] + H(+). The protein operates within bacterial outer membrane biogenesis; LPS lipid A biosynthesis. In terms of biological role, catalyzes the N-acylation of UDP-3-O-acylglucosamine using 3-hydroxyacyl-ACP as the acyl donor. Is involved in the biosynthesis of lipid A, a phosphorylated glycolipid that anchors the lipopolysaccharide to the outer membrane of the cell. This chain is UDP-3-O-acylglucosamine N-acyltransferase 2, found in Koribacter versatilis (strain Ellin345).